The primary structure comprises 441 residues: MAGQSEDPSLERHFKGHRDTVTAVDFNANTKQLASGSMDSCLMVWNMKTQMRAYRFVGHKDAILSVDFSPSGHLIASASRDKTVRLWVPSVKGESTAFKAHTGTVRSVSFSGDGQSLVTASDDKTIKVWTVHRQKFLFSLNQHINWVRCAKFSPDGRLIVSASDDKTIKLWDKTSRECIQSFCEHGGFVNFVDFHPSGTCIAAAATDNTVKVWDIRMNKLIQHYQVHSGVVNSLSFHPSGNYLITASNDSTLKVLDLLEGRLLYTLHGHQGPVTCVKFSREGDFFASGGSDEQVMVWKTNFDAGSYPDLLKYRQNDTFPSGGDYTSIVQPADVHQPARNAHVTQAADLEPHITEMSVKDRSSPLSYTSRSVDQHHPQAEDGNLQTVASTLEHIVGQLDILTRTVGILEQRLSLTEDKLKECIEQQQATVPPSHSGTKKSSF.

WD repeat units lie at residues Gly-16–Arg-55, Gly-58–Ala-97, Ala-100–Ser-139, Gln-142–Ser-181, Glu-184–His-223, Val-226–Thr-265, and Gly-268–Pro-307. Residues Asp-347–Pro-376 are disordered. Over residues Leu-348 to Ser-361 the composition is skewed to basic and acidic residues. A coiled-coil region spans residues Leu-400–Ala-427.

It belongs to the WD repeat POC1 family. As to quaternary structure, interacts with pat.

Its subcellular location is the cytoplasm. It is found in the cytoskeleton. May play an important role in centriole assembly and/or stability and ciliogenesis. This is POC1 centriolar protein homolog A (poc1a) from Xenopus laevis (African clawed frog).